The primary structure comprises 704 residues: ATP-dependent DNA helicase Hel308 (704 aa).

Residues Gln-31 and 49–56 (SPTASGKT) each bind ATP. The Helicase ATP-binding domain maps to 36 to 200 (RKGLLDGKRL…WLNAELVATN (165 aa)). The DEAH box motif lies at 148 to 151 (DEFH). In terms of domain architecture, Helicase C-terminal spans 235-439 (AIIAYTLDIV…AFYSFLISII (205 aa)). The interval 366–645 (VVGYMDLIPV…LHARVKDGVK (280 aa)) is binds Hjc. A required for helicase activity region spans residues 432 to 644 (YSFLISIIAS…ELHARVKDGV (213 aa)). An inhibits intrinsic ATPase, and helicase region spans residues 646–704 (PELIELVKIPGIGRVRARLLYQHDIKKPEDIVLNPEKVKQLLGPNLGEKIVREAARTIA).

This sequence belongs to the helicase family. Hel308 subfamily. In terms of assembly, monomer; forms a 1:2 complex with Hjc, which may form a complex with Holliday junction DNA. It depends on Mg(2+) as a cofactor.

The enzyme catalyses Couples ATP hydrolysis with the unwinding of duplex DNA by translocating in the 3'-5' direction.. The catalysed reaction is ATP + H2O = ADP + phosphate + H(+). It catalyses the reaction Couples ATP hydrolysis with the unwinding of duplex DNA at the replication fork by translocating in the 5'-3' direction. This creates two antiparallel DNA single strands (ssDNA). The leading ssDNA polymer is the template for DNA polymerase III holoenzyme which synthesizes a continuous strand.. Helicase activity is inhibited by Hjc and by PCNA123 and PCNA323. Its function is as follows. An ATP, Mg(2+)-dependent DNA 3'-5' and 5'-3' helicase that may be involved in repair of stalled replication forks. Stimulated by both ss and dsDNA. Unwinds both leading and lagging strands in replication fork structures, unlike orthologs in P.furiosus and M.thermautotrophicus which only unwind the lagging strand and only have 3'-5' helicase activity. Preferentially binds dsDNA with overhangs or branched DNA. Able to anneal DNA substrates that could form a replication fork-like structure, has replication fork reversal activity (at least in vitro). In Sulfurisphaera tokodaii (strain DSM 16993 / JCM 10545 / NBRC 100140 / 7) (Sulfolobus tokodaii), this protein is ATP-dependent DNA helicase Hel308.